A 581-amino-acid polypeptide reads, in one-letter code: ATP-dependent lipid A-core flippase (581 aa).

5 helical membrane-spanning segments follow: residues 27–47 (VFLA…FPAI), 63–83 (MVWL…VIVY), 154–174 (IALI…TLAI), 251–271 (MTPI…FLAL), and 279–299 (GASA…ISPV). Residues 28-311 (FLAVIGMVGT…LATVNPTIQR (284 aa)) enclose the ABC transmembrane type-1 domain. The ABC transporter domain occupies 343-579 (ICFDNVSLRY…GSYYANLSRL (237 aa)). Residue 377-384 (GASGGGKS) coordinates ATP.

Belongs to the ABC transporter superfamily. Lipid exporter (TC 3.A.1.106) family. Homodimer.

The protein localises to the cell inner membrane. It carries out the reaction ATP + H2O + lipid A-core oligosaccharideSide 1 = ADP + phosphate + lipid A-core oligosaccharideSide 2.. In terms of biological role, involved in lipopolysaccharide (LPS) biosynthesis. Translocates lipid A-core from the inner to the outer leaflet of the inner membrane. Transmembrane domains (TMD) form a pore in the inner membrane and the ATP-binding domain (NBD) is responsible for energy generation. This chain is ATP-dependent lipid A-core flippase, found in Albidiferax ferrireducens (strain ATCC BAA-621 / DSM 15236 / T118) (Rhodoferax ferrireducens).